A 264-amino-acid polypeptide reads, in one-letter code: S-adenosylmethionine decarboxylase proenzyme (264 aa).

S113 functions as the Schiff-base intermediate with substrate; via pyruvic acid in the catalytic mechanism. S113 is modified (pyruvic acid (Ser); by autocatalysis). H118 functions as the Proton acceptor; for processing activity in the catalytic mechanism. The active-site Proton donor; for catalytic activity is C141.

The protein belongs to the prokaryotic AdoMetDC family. Type 2 subfamily. As to quaternary structure, heterooctamer of four alpha and four beta chains arranged as a tetramer of alpha/beta heterodimers. Requires pyruvate as cofactor. In terms of processing, is synthesized initially as an inactive proenzyme. Formation of the active enzyme involves a self-maturation process in which the active site pyruvoyl group is generated from an internal serine residue via an autocatalytic post-translational modification. Two non-identical subunits are generated from the proenzyme in this reaction, and the pyruvate is formed at the N-terminus of the alpha chain, which is derived from the carboxyl end of the proenzyme. The post-translation cleavage follows an unusual pathway, termed non-hydrolytic serinolysis, in which the side chain hydroxyl group of the serine supplies its oxygen atom to form the C-terminus of the beta chain, while the remainder of the serine residue undergoes an oxidative deamination to produce ammonia and the pyruvoyl group blocking the N-terminus of the alpha chain.

It catalyses the reaction S-adenosyl-L-methionine + H(+) = S-adenosyl 3-(methylsulfanyl)propylamine + CO2. Its pathway is amine and polyamine biosynthesis; S-adenosylmethioninamine biosynthesis; S-adenosylmethioninamine from S-adenosyl-L-methionine: step 1/1. Catalyzes the decarboxylation of S-adenosylmethionine to S-adenosylmethioninamine (dcAdoMet), the propylamine donor required for the synthesis of the polyamines spermine and spermidine from the diamine putrescine. The polypeptide is S-adenosylmethionine decarboxylase proenzyme (Stenotrophomonas maltophilia (strain R551-3)).